Here is a 376-residue protein sequence, read N- to C-terminus: Alanine racemase (376 aa).

Lys-36 acts as the Proton acceptor; specific for D-alanine in catalysis. Lys-36 carries the post-translational modification N6-(pyridoxal phosphate)lysine. Arg-134 lines the substrate pocket. Residue Tyr-266 is the Proton acceptor; specific for L-alanine of the active site. Substrate is bound at residue Met-314.

Belongs to the alanine racemase family. The cofactor is pyridoxal 5'-phosphate.

It catalyses the reaction L-alanine = D-alanine. It participates in amino-acid biosynthesis; D-alanine biosynthesis; D-alanine from L-alanine: step 1/1. Its function is as follows. Catalyzes the interconversion of L-alanine and D-alanine. May also act on other amino acids. In Nitratidesulfovibrio vulgaris (strain DP4) (Desulfovibrio vulgaris), this protein is Alanine racemase (alr).